The sequence spans 414 residues: uncharacterized protein (414 aa).

3 disordered regions span residues Ser136–Thr168, Pro297–Ser333, and Ala346–Lys414. The span at Pro350–Ser359 shows a compositional bias: polar residues. The span at Ser399 to Lys414 shows a compositional bias: basic and acidic residues.

This is an uncharacterized protein from Homo sapiens (Human).